A 258-amino-acid polypeptide reads, in one-letter code: uncharacterized protein (258 aa).

The signal sequence occupies residues 1-20 (MKCFQKLYIFILILIVLMAG). The N-palmitoyl cysteine moiety is linked to residue Cys-21. Residue Cys-21 is the site of S-diacylglycerol cysteine attachment.

It belongs to the staphylococcal tandem lipoprotein family.

The protein resides in the cell membrane. This is an uncharacterized protein from Staphylococcus aureus (strain COL).